The following is a 935-amino-acid chain: Protocadherin gamma-A11 (935 aa).

Positions M1–A29 are cleaved as a signal peptide. Cadherin domains follow at residues R30 to F134, Q135 to F243, T244 to I348, T349 to F453, P454 to I563, and D571 to G677. The Extracellular segment spans residues R30–Y693. Residue N48 is glycosylated (N-linked (GlcNAc...) asparagine). N255, N266, N420, and N546 each carry an N-linked (GlcNAc...) asparagine glycan. The chain crosses the membrane as a helical span at residues L694–A714. Residues L715 to K935 lie on the Cytoplasmic side of the membrane. 2 disordered regions span residues C805 to N844 and A905 to K935. The span at P807–N844 shows a compositional bias: polar residues. A compositionally biased stretch (basic residues) spans N925–K935.

The protein resides in the cell membrane. Potential calcium-dependent cell-adhesion protein. May be involved in the establishment and maintenance of specific neuronal connections in the brain. This chain is Protocadherin gamma-A11 (PCDHGA11), found in Homo sapiens (Human).